A 559-amino-acid polypeptide reads, in one-letter code: MAAPVLLLKEGTSRTTGRDALRNNILAAKTLAEMLRSSLGPKGLDKMLIDSFGDVTITNDGATIVKDMEIQHPAAKLLVEAAKAQDAEVGDGTTSAVVLAGALLEKAESLLDQNIHPTIIIEGYKKAYNKALELLPQLGTRIDIKDLNSSVARDTLRKIAFTTLASKFIAEGAELNKIIDMVIDAIVNVAEPLPNGGYNVSLDLIKIDKKKGGSIEDSVLVKGLVLDKEVVHPGMPRRVTKAKIAVLDAALEVEKPEISAKISITSPEQIKAFLDEESKYLKDMVDKLASIGANVVICQKGIDDIAQHFLAKKGILAVRRVKRSDIEKLEKALGARIISSIKDATPEDLGYAELVEERRVGNDKMVFIEGAKNLKAVNILLRGSNDMALDEAERSINDALHALRNILLEPVILPGGGAIELELAMKLREYARSVGGKEQLAIEAFADALEEIPLILAETAGLEAISSLMDLRARHAKGLSNTGVDVIGGKIVDDVYALNIIEPIRVKSQVLKSATEAATAILKIDDLIAAAPLKSEKKGGEGSKEESGGEGGSTPSLGD.

Over residues 535–547 the composition is skewed to basic and acidic residues; it reads SEKKGGEGSKEES. Residues 535 to 559 are disordered; it reads SEKKGGEGSKEESGGEGGSTPSLGD.

The protein belongs to the TCP-1 chaperonin family. In terms of assembly, forms a Heterooligomeric complex of two stacked eight-membered rings.

Molecular chaperone; binds unfolded polypeptides in vitro, and has a weak ATPase activity. The polypeptide is Thermosome subunit alpha (thsA) (Saccharolobus solfataricus (strain ATCC 35092 / DSM 1617 / JCM 11322 / P2) (Sulfolobus solfataricus)).